We begin with the raw amino-acid sequence, 380 residues long: Crotonobetainyl-CoA reductase (380 aa).

It belongs to the acyl-CoA dehydrogenase family. Homotetramer. The cofactor is FAD.

Its subcellular location is the cytoplasm. It carries out the reaction 4-(trimethylamino)butanoyl-CoA + oxidized [electron-transfer flavoprotein] + H(+) = crotonobetainyl-CoA + reduced [electron-transfer flavoprotein]. It participates in amine and polyamine metabolism; carnitine metabolism. Catalyzes the reduction of crotonobetainyl-CoA to gamma-butyrobetainyl-CoA. The sequence is that of Crotonobetainyl-CoA reductase from Escherichia coli (strain UTI89 / UPEC).